A 579-amino-acid chain; its full sequence is MEARGKVVGVIGNLVTIEVVGTVSMNEIVFIKTGGRSLKAEIIRIRDGEVDAQVFEMTRGIAVGDDIEFTNKLLTVELGPGLLSQVYDGLQNPLPELAAQCGFFLERGLYLSALDRKKKWHFNATAKVGDIVVAGDFLGFVIEGTIKHKIMIPFDRRDSYSIVEIVSDGDYTIDDKIAVVENDAGGKHIITMSFHWPVKIPITNYKERLIPSEPMVTQTRIIDTFFPVAKGGTFCIPGPFGAGKTVLQQVTSRNADVDIVIIAACGERAGEVVETLKEFPELIDPRTGKSLMERTCIICNTSSMPVAAREASVYTAITIGEYYRQMGLDILLLADSTSRWAQAMREMSGRLEEIPGEEAFPAYLESVIASFYERAGIVVLNDGSFGSVTVGGSVSPAGGNFEEPVTQATLKVVGAFHGLTRERSDARKFPAINPLESWSKYRGVVEFGKTEYARDFLAKGNEINQMMKVVGEEGISNGDFLVYLKSELLDSCYLQQNSFDSVDAAVNPERQNYMFDMLYDILQSDFKFESKLEARGFINELRQNILDMNLTPFKEEKFNKLEVSLKNLVRSKKLDFRGA.

Residue 238–245 (GPFGAGKT) coordinates ATP.

This sequence belongs to the ATPase alpha/beta chains family.

It catalyses the reaction ATP + H2O + 4 H(+)(in) = ADP + phosphate + 5 H(+)(out). Its function is as follows. Produces ATP from ADP in the presence of a proton gradient across the membrane. The V-type alpha chain is a catalytic subunit. This chain is V-type ATP synthase alpha chain, found in Borrelia hermsii (strain HS1 / DAH).